The primary structure comprises 95 residues: Protein TusB (95 aa).

The protein belongs to the DsrH/TusB family. In terms of assembly, heterohexamer, formed by a dimer of trimers. The hexameric TusBCD complex contains 2 copies each of TusB, TusC and TusD. The TusBCD complex interacts with TusE.

It localises to the cytoplasm. Functionally, part of a sulfur-relay system required for 2-thiolation of 5-methylaminomethyl-2-thiouridine (mnm(5)s(2)U) at tRNA wobble positions. This Escherichia coli O81 (strain ED1a) protein is Protein TusB.